A 277-amino-acid polypeptide reads, in one-letter code: Shikimate dehydrogenase (NADP(+)) (277 aa).

Shikimate is bound by residues 15–17 (SLS) and Thr62. The active-site Proton acceptor is the Lys66. 2 residues coordinate shikimate: Asn87 and Asp102. NADP(+) is bound by residues 127–131 (GAGGA), 151–156 (NRTVDK), and Ile219. Tyr221 serves as a coordination point for shikimate. Residue Gly242 participates in NADP(+) binding.

The protein belongs to the shikimate dehydrogenase family. In terms of assembly, homodimer.

The enzyme catalyses shikimate + NADP(+) = 3-dehydroshikimate + NADPH + H(+). It participates in metabolic intermediate biosynthesis; chorismate biosynthesis; chorismate from D-erythrose 4-phosphate and phosphoenolpyruvate: step 4/7. Functionally, involved in the biosynthesis of the chorismate, which leads to the biosynthesis of aromatic amino acids. Catalyzes the reversible NADPH linked reduction of 3-dehydroshikimate (DHSA) to yield shikimate (SA). The polypeptide is Shikimate dehydrogenase (NADP(+)) (Bacillus cereus (strain ZK / E33L)).